The primary structure comprises 421 residues: Histidine--tRNA ligase (421 aa).

The protein belongs to the class-II aminoacyl-tRNA synthetase family. Homodimer.

It is found in the cytoplasm. The enzyme catalyses tRNA(His) + L-histidine + ATP = L-histidyl-tRNA(His) + AMP + diphosphate + H(+). The polypeptide is Histidine--tRNA ligase (Francisella tularensis subsp. mediasiatica (strain FSC147)).